We begin with the raw amino-acid sequence, 256 residues long: Nuclear shuttle protein (256 aa).

Residues 18 to 39 carry the Bipartite nuclear localization signal motif; sequence NITNRYPIKRKYVAGHTRPCVR. The short motif at 81–96 is the Nuclear localization signal element; the sequence is SRGPSGDGRSRDYIKL. Residues 150-187 form an interaction with Arabidopsis thaliana NSI protein region; sequence ELFGPYSACYVNLRLLNNQQHRYRVLHSVKRFVSSSGD.

Belongs to the begomovirus nuclear shuttle protein family. As to quaternary structure, binds to single-stranded and double-stranded viral DNA. Interacts with the host nuclear shuttle interacting (NSI) protein. This interaction may allow NSP to recruit NSI monomers to the viral genome and thus regulate nuclear export of viral genome by NSP.

It localises to the host nucleus. It is found in the host cytoplasm. Its subcellular location is the host cell membrane. In terms of biological role, binds to the genomic viral ssDNA, shuttles it into and out of the cell nucleus. Begomoviruses use 2 proteins to transport their DNA from cell to cell. The nuclear shuttle protein (NSP) shuttles it between nucleus and cytoplasm and the movement protein (MP) probably transports the DNA-NSP complex to the cell periphery and facilitates movement across the cell wall. This Hewittia sublobata (Coralbush) protein is Nuclear shuttle protein.